The primary structure comprises 126 residues: SH2 domain-containing protein 1A (126 aa).

The SH2 domain occupies 6 to 104 (VYHGKISRET…VTPLQYPVEK (99 aa)). Residues 67 to 92 (ETAPGVHKRFFRKVKNLISAFQKPDQ) form an interaction with FYN SH3 domain region. Lysine 89 bears the N6-acetyllysine mark. A disordered region spans residues 100–126 (YPVEKSSGRGPQAPTGRRDSDICLNAP).

In terms of assembly, interacts with CD84, CD244, LY9, SLAMF1 and FYN. Interacts with NTRK1, NTRK2 and NTRK3. T-cells.

Its subcellular location is the cytoplasm. In terms of biological role, cytoplasmic adapter regulating receptors of the signaling lymphocytic activation molecule (SLAM) family such as SLAMF1, CD244, LY9, CD84, SLAMF6 and SLAMF7. In SLAM signaling seems to cooperate with SH2D1B/EAT-2. Initially it has been proposed that association with SLAMF1 prevents SLAMF1 binding to inhibitory effectors including INPP5D/SHIP1 and PTPN11/SHP-2. However, by simultaneous interactions, recruits FYN which subsequently phosphorylates and activates SLAMF1. Positively regulates CD244/2B4- and CD84-mediated natural killer (NK) cell functions. Can also promote CD48-, SLAMF6 -, LY9-, and SLAMF7-mediated NK cell activation. In the context of NK cell-mediated cytotoxicity enhances conjugate formation with target cells. May also regulate the activity of the neurotrophin receptors NTRK1, NTRK2 and NTRK3. The sequence is that of SH2 domain-containing protein 1A (Sh2d1a) from Mus musculus (Mouse).